The following is a 716-amino-acid chain: Ubiquitin thioesterase zranb1-B (716 aa).

2 consecutive RanBP2-type zinc fingers follow at residues 3–33 (DLGL…QRHN) and 82–111 (TSSK…QRQQ). Cysteine 10, cysteine 13, cysteine 24, cysteine 27, cysteine 88, cysteine 91, cysteine 102, and cysteine 105 together coordinate Zn(2+). A disordered region spans residues 113-143 (SQQHSPLSPSETPQTSGSRPSPVTSDPCEEY). Residues 118–136 (PLSPSETPQTSGSRPSPVT) are compositionally biased toward polar residues. The segment at 152-181 (HAQRWPCSACTYENWPKSLRCVVCDHPKPS) adopts a RanBP2-type 3 zinc-finger fold. 4 residues coordinate Zn(2+): cysteine 158, cysteine 161, cysteine 172, and cysteine 175. A disordered region spans residues 178–228 (PKPSGSPETPQQDSEAESATSPSIVNEQERENVRTAGGGGGGSRGRLRKLS). Residues 183-203 (SPETPQQDSEAESATSPSIVN) are compositionally biased toward polar residues. ANK repeat units follow at residues 268 to 298 (RRSD…SGGD) and 321 to 348 (FTLV…QQTA). Residues 440 to 600 (LYALWNRTAG…RGHFSALVAM (161 aa)) form the OTU domain. The active-site Nucleophile is cysteine 451. Histidine 593 (proton acceptor) is an active-site residue.

It belongs to the peptidase C64 family.

It is found in the cytoplasm. The protein resides in the nucleus. It carries out the reaction Thiol-dependent hydrolysis of ester, thioester, amide, peptide and isopeptide bonds formed by the C-terminal Gly of ubiquitin (a 76-residue protein attached to proteins as an intracellular targeting signal).. Functionally, ubiquitin thioesterase, which specifically hydrolyzes 'Lys-29'-linked and 'Lys-33'-linked diubiquitin. Also cleaves 'Lys-63'-linked chains, but with 40-fold less efficiency compared to 'Lys-29'-linked ones. Positive regulator of the Wnt signaling pathway that deubiquitinates apc protein, a negative regulator of Wnt-mediated transcription. Acts as a regulator of autophagy by mediating deubiquitination of pik3c3/vps34, thereby promoting autophagosome maturation. Plays a role in the regulation of cell morphology and cytoskeletal organization. Required in the stress fiber dynamics and cell migration. This chain is Ubiquitin thioesterase zranb1-B (zranb1b), found in Danio rerio (Zebrafish).